Here is a 76-residue protein sequence, read N- to C-terminus: MPHVDIKCFPRDLNDEQKTALAADIAEVIIRHFNSKDSSVSVALNQVQQEDWKAQVWDTEIGPKLDELIKKPGYSM.

Proline 2 (proton acceptor; via imino nitrogen) is an active-site residue.

This sequence belongs to the 4-oxalocrotonate tautomerase family. PptA subfamily. In terms of assembly, homodimer.

Its subcellular location is the cytoplasm. This Enterobacter sp. (strain 638) protein is Tautomerase PptA.